We begin with the raw amino-acid sequence, 215 residues long: MIEQLIQQAQPYWQQYIEHEFVQQLAKGTLPKACFQHYLKQDYLYLFHYSRAFALGVFKAKNFAEMETPRKTLEILCQEIQLHLNYCREWGISEQEIFTTQESAACIAYTRYLLDCGMTGSLAELYAAVTPCALGYAQVARYITQHYPRLPNNPYQTWIDTYASEEFQQAAQETVDFLTALCKPLNPSQLAEIQQIFTTATRMEIAFWQMGLDLA.

It belongs to the thiaminase-2 family.

This is an uncharacterized protein from Haemophilus influenzae (strain ATCC 51907 / DSM 11121 / KW20 / Rd).